We begin with the raw amino-acid sequence, 133 residues long: Protein archease (133 aa).

Residues aspartate 11, aspartate 132, and leucine 133 each contribute to the Ca(2+) site.

It belongs to the archease family.

Activates the tRNA-splicing ligase complex by facilitating the enzymatic turnover of catalytic subunit RtcB. Acts by promoting the guanylylation of RtcB, a key intermediate step in tRNA ligation. Can also alter the NTP specificity of RtcB such that ATP, dGTP or ITP is used efficiently. The protein is Protein archease of Thermoplasma volcanium (strain ATCC 51530 / DSM 4299 / JCM 9571 / NBRC 15438 / GSS1).